A 143-amino-acid chain; its full sequence is Nucleoside diphosphate kinase (143 aa).

K11, F59, R87, T93, R104, and N114 together coordinate ATP. H117 acts as the Pros-phosphohistidine intermediate in catalysis.

Belongs to the NDK family. In terms of assembly, homotetramer. Mg(2+) serves as cofactor.

The protein resides in the cytoplasm. The catalysed reaction is a 2'-deoxyribonucleoside 5'-diphosphate + ATP = a 2'-deoxyribonucleoside 5'-triphosphate + ADP. It carries out the reaction a ribonucleoside 5'-diphosphate + ATP = a ribonucleoside 5'-triphosphate + ADP. Its function is as follows. Major role in the synthesis of nucleoside triphosphates other than ATP. The ATP gamma phosphate is transferred to the NDP beta phosphate via a ping-pong mechanism, using a phosphorylated active-site intermediate. The protein is Nucleoside diphosphate kinase of Shewanella piezotolerans (strain WP3 / JCM 13877).